We begin with the raw amino-acid sequence, 1894 residues long: Plexin-A1 (1894 aa).

An N-terminal signal peptide occupies residues 1–27; the sequence is MPLPPLSSRTLLLLLLLLLRGVWIAIS. Positions 28–510 constitute a Sema domain; that stretch reads SPPAGLGPQP…TEKQVTQVPV (483 aa). Topologically, residues 28-1242 are extracellular; that stretch reads SPPAGLGPQP…VYSDSLLTLP (1215 aa). A glycan (N-linked (GlcNAc...) asparagine) is linked at Asn-75. Disulfide bonds link Cys-93–Cys-102, Cys-128–Cys-136, Cys-284–Cys-405, Cys-300–Cys-356, Cys-374–Cys-393, Cys-513–Cys-530, Cys-519–Cys-561, Cys-522–Cys-539, Cys-533–Cys-545, and Cys-596–Cys-615. N-linked (GlcNAc...) asparagine glycans are attached at residues Asn-658, Asn-670, and Asn-699. IPT/TIG domains lie at 862 to 957, 959 to 1043, 1046 to 1145, and 1148 to 1234; these read PKIL…FTFV, PTFY…YNYT, PTIL…FLYY, and PVLE…LQVY. Asn-1041 carries N-linked (GlcNAc...) asparagine glycosylation. 2 N-linked (GlcNAc...) asparagine glycosylation sites follow: Asn-1185 and Asn-1210. The helical transmembrane segment at 1243-1263 threads the bilayer; sequence AIVGIGGGGGLLLLVIVAVLI. A coiled-coil region spans residues 1262-1315; sequence LIAYKRKSRDADRTLKRLQLQMDNLESRVALECKEAFAELQTDIHELTSDLDGA. The Cytoplasmic portion of the chain corresponds to 1264–1894; sequence AYKRKSRDAD…QVVDTMALSS (631 aa).

Belongs to the plexin family. As to quaternary structure, interacts directly with NRP1 and NRP2. Interacts with PLXN1B. Interacts with FARP2, RND1 and KDR/VEGFR2. Binding of SEMA3A leads to dissociation of FARP2. Interacts with CRMP1, DPYSL2/CRMP2, DPYSL3/CRMP3 and DPYSL4/CRMP4. Interacts (via TIG domains) with TREM2; the interaction mediates SEMA6D binding and signaling through TYROBP. Ubiquitous.

The protein localises to the cell membrane. In terms of biological role, coreceptor for SEMA3A, SEMA3C, SEMA3F and SEMA6D. Necessary for signaling by class 3 semaphorins and subsequent remodeling of the cytoskeleton. Plays a role in axon guidance, invasive growth and cell migration. Class 3 semaphorins bind to a complex composed of a neuropilin and a plexin. The plexin modulates the affinity of the complex for specific semaphorins, and its cytoplasmic domain is required for the activation of down-stream signaling events in the cytoplasm. Acts as coreceptor of TREM2 for SEMA6D in dendritic cells and is involved in the generation of immune responses and skeletal homeostasis. This Mus musculus (Mouse) protein is Plexin-A1 (Plxna1).